The chain runs to 224 residues: MDSNWINCPSVFSSSSSSSRRCQSRSDLYLGGGYEDLEGEDDLKAEFICPFCAEDFDIVGLCCHIDEEHPVEAKNGVCPVCTKRVGLDIVGHITTQHANFFKVQRRRRLRRGGYSSTYLALKKELREANLQSLLGGSSSFTSSTNIDSDPLLSSFMFNSPSVNQSANKSATPVTVGNAATKVSIKESLKRDIQEAPLSGEDQEKAKKSEFVRGLLLSTMLEDDF.

Polar residues predominate over residues 1–12; it reads MDSNWINCPSVF. Residues 1–23 form a disordered region; it reads MDSNWINCPSVFSSSSSSSRRCQ. Residues 13 to 23 are compositionally biased toward low complexity; sequence SSSSSSSRRCQ. Residue threonine 117 is modified to Phosphothreonine.

Belongs to the Di19 family. In terms of processing, phosphorylated in vitro by CPK3 or CPK11. As to expression, expressed in seedlings, roots, leaves, stems, flowers and siliques.

The protein localises to the cytoplasm. It localises to the perinuclear region. In Arabidopsis thaliana (Mouse-ear cress), this protein is Protein DEHYDRATION-INDUCED 19 homolog 4 (DI19-4).